We begin with the raw amino-acid sequence, 638 residues long: ATP-dependent rRNA helicase spb4 (638 aa).

A Q motif motif is present at residues 14–42 (WDAVNPPLSEWVLDAVSSMGFTRMTPVQA). The Helicase ATP-binding domain maps to 45-249 (IPLFMAHKDV…RVGLRNPVKV (205 aa)). 58–65 (AVTGSGKT) contributes to the ATP binding site. The short motif at 197–200 (DEAD) is the DEAD box element. Positions 283–437 (ALKHILNSVQ…PITVSDAEAA (155 aa)) constitute a Helicase C-terminal domain. Residues 521–629 (AYKDKQREKR…AKADKDAEEG (109 aa)) adopt a coiled-coil conformation. The disordered stretch occupies residues 538 to 638 (MAESGQQQTT…GGDEEFTGFD (101 aa)). Over residues 574 to 597 (MKQVRQERKRWEKMTEEEKKKALE) the composition is skewed to basic and acidic residues. The segment covering 625-638 (DAEEGGDEEFTGFD) has biased composition (acidic residues).

Belongs to the DEAD box helicase family. DDX55/SPB4 subfamily. In terms of assembly, component of pre-60S ribosomal complexes.

It is found in the nucleus. It localises to the nucleolus. It carries out the reaction ATP + H2O = ADP + phosphate + H(+). Its function is as follows. ATP-binding RNA helicase involved in the biogenesis of 60S ribosomal subunits. Binds 90S pre-ribosomal particles and dissociates from pre-60S ribosomal particles after processing of 27SB pre-rRNA. Required for the normal formation of 18S rRNA through the processing of pre-rRNAs at sites A0, A1 and A2, and the normal formation of 25S and 5.8S rRNAs through the processing of pre-rRNAs at sites C1 and C2. The protein is ATP-dependent rRNA helicase spb4 of Emericella nidulans (strain FGSC A4 / ATCC 38163 / CBS 112.46 / NRRL 194 / M139) (Aspergillus nidulans).